Consider the following 1396-residue polypeptide: DNA-directed RNA polymerase subunit beta' (1396 aa).

The Zn(2+) site is built by Cys73, Cys75, Cys88, and Cys91. The Mg(2+) site is built by Asp467, Asp469, and Asp471. 4 residues coordinate Zn(2+): Cys817, Cys891, Cys898, and Cys901.

Belongs to the RNA polymerase beta' chain family. As to quaternary structure, the RNAP catalytic core consists of 2 alpha, 1 beta, 1 beta' and 1 omega subunit. When a sigma factor is associated with the core the holoenzyme is formed, which can initiate transcription. The cofactor is Mg(2+). It depends on Zn(2+) as a cofactor.

It carries out the reaction RNA(n) + a ribonucleoside 5'-triphosphate = RNA(n+1) + diphosphate. DNA-dependent RNA polymerase catalyzes the transcription of DNA into RNA using the four ribonucleoside triphosphates as substrates. The protein is DNA-directed RNA polymerase subunit beta' of Orientia tsutsugamushi (strain Boryong) (Rickettsia tsutsugamushi).